The chain runs to 502 residues: Probable cytosol aminopeptidase (502 aa).

2 residues coordinate Mn(2+): Lys-269 and Asp-274. Lys-281 is a catalytic residue. The Mn(2+) site is built by Asp-292, Asp-351, and Glu-353. The active site involves Arg-355.

The protein belongs to the peptidase M17 family. It depends on Mn(2+) as a cofactor.

It is found in the cytoplasm. It carries out the reaction Release of an N-terminal amino acid, Xaa-|-Yaa-, in which Xaa is preferably Leu, but may be other amino acids including Pro although not Arg or Lys, and Yaa may be Pro. Amino acid amides and methyl esters are also readily hydrolyzed, but rates on arylamides are exceedingly low.. The enzyme catalyses Release of an N-terminal amino acid, preferentially leucine, but not glutamic or aspartic acids.. In terms of biological role, presumably involved in the processing and regular turnover of intracellular proteins. Catalyzes the removal of unsubstituted N-terminal amino acids from various peptides. The protein is Probable cytosol aminopeptidase of Shewanella frigidimarina (strain NCIMB 400).